A 322-amino-acid polypeptide reads, in one-letter code: Aldo-keto reductase family 1 member C13 (322 aa).

NAD(+) is bound by residues G20–Y24 and D50. Y55 functions as the Proton donor in the catalytic mechanism. Residue H117 participates in substrate binding. NAD(+)-binding positions include S166–N167, Q190, F216–Y224, and Q270–N280.

The protein belongs to the aldo/keto reductase family. Monomer. In terms of processing, the N-terminus is blocked.

It catalyses the reaction morphine + NAD(+) = morphinone + NADH + H(+). The catalysed reaction is morphine + NADP(+) = morphinone + NADPH + H(+). Its activity is regulated as follows. Strongly inhibited by sulfhydryl reagents and ketamine, but not by pyrazole, barbital and indomethacine. Functionally, catalyzes the dehydrogenation of morphine to morphinone. The enzyme also exhibits significant activity for a variety of cyclic and alicyclic alcohols. In addition to xenobiotics, the enzyme catalyzes the dehydrogenation of 17-beta-hydroxysteroids with much higher affinities than morphine. Uses both NAD and NADP, but the activity is much greater with NAD than with NADP. This Mesocricetus auratus (Golden hamster) protein is Aldo-keto reductase family 1 member C13 (AKR1C13).